Here is a 961-residue protein sequence, read N- to C-terminus: Alanine--tRNA ligase, chloroplastic/mitochondrial (961 aa).

Zn(2+)-binding residues include His641, His645, Cys743, and His747.

The protein belongs to the class-II aminoacyl-tRNA synthetase family. Monomer. It depends on Zn(2+) as a cofactor.

The protein resides in the plastid. It localises to the chloroplast. It is found in the mitochondrion. It carries out the reaction tRNA(Ala) + L-alanine + ATP = L-alanyl-tRNA(Ala) + AMP + diphosphate. Functionally, catalyzes the attachment of alanine to tRNA(Ala) in a two-step reaction: alanine is first activated by ATP to form Ala-AMP and then transferred to the acceptor end of tRNA(Ala). Also edits incorrectly charged tRNA(Ala) via its editing domain. The protein is Alanine--tRNA ligase, chloroplastic/mitochondrial of Sorghum bicolor (Sorghum).